Here is a 908-residue protein sequence, read N- to C-terminus: Metabotropic glutamate receptor 8 (908 aa).

A signal peptide spans 1–33; it reads MVCEGKRSTSCPCFFLLTAKFYWILTMMQRTHS. The Extracellular portion of the chain corresponds to 34-583; that stretch reads QEYAHSIRLD…IIKLEWHSPW (550 aa). Cysteine 64 and cysteine 106 are disulfide-bonded. The N-linked (GlcNAc...) asparagine glycan is linked to asparagine 95. Residues serine 156, 177-179, and tyrosine 227 each bind L-glutamate; that span reads AST. Intrachain disulfides connect cysteine 246-cysteine 534, cysteine 369-cysteine 384, cysteine 424-cysteine 431, cysteine 516-cysteine 535, cysteine 520-cysteine 538, cysteine 541-cysteine 553, and cysteine 556-cysteine 569. An N-linked (GlcNAc...) asparagine glycan is attached at asparagine 298. Aspartate 309 lines the L-glutamate pocket. Lysine 401 is a binding site for L-glutamate. N-linked (GlcNAc...) asparagine glycosylation is found at asparagine 452 and asparagine 480. A glycan (N-linked (GlcNAc...) asparagine) is linked at asparagine 565. A helical transmembrane segment spans residues 584 to 608; that stretch reads AVVPVFIAILGIIATTFVIVTFVRY. The Cytoplasmic portion of the chain corresponds to 609-620; sequence NDTPIVRASGRE. The chain crosses the membrane as a helical span at residues 621–641; the sequence is LSYVLLTGIFLCYSITFLMIA. The Extracellular segment spans residues 642–647; it reads APDTII. A helical transmembrane segment spans residues 648-668; that stretch reads CSFRRIFLGLGMCFSYAALLT. Residues 669–695 lie on the Cytoplasmic side of the membrane; sequence KTNRIHRIFEQGKKSVTAPKFISPASQ. Residues 696–716 traverse the membrane as a helical segment; it reads LVITFSLISVQLLGVFVWFVV. The Extracellular segment spans residues 717–746; it reads DPPHTIIDYGEQRTLDPENARGVLKCDISD. A helical transmembrane segment spans residues 747-768; that stretch reads LSLICSLGYSILLMVTCTVYAI. Over 769–781 the chain is Cytoplasmic; sequence KTRGVPETFNEAK. The helical transmembrane segment at 782–803 threads the bilayer; sequence PIGFTMYTTCIIWLAFIPIFFG. At 804–818 the chain is on the extracellular side; sequence TAQSAEKMYIQTTTL. Residues 819–843 form a helical membrane-spanning segment; sequence TVSMSLSASVSLGMLYMPKVYIIIF. Residues 844-908 lie on the Cytoplasmic side of the membrane; sequence HPEQNVQKRK…TYISYSNHSI (65 aa). A Glycyl lysine isopeptide (Lys-Gly) (interchain with G-Cter in SUMO1) cross-link involves residue lysine 882.

This sequence belongs to the G-protein coupled receptor 3 family. Interacts with PICK1. In terms of tissue distribution, strongly expressed in olfactory bulb, accessory olfactory bulb, and mammillary body. Weaker expression in the retina, and in scattered cells in the cortex and hindbrain.

The protein resides in the cell membrane. G-protein coupled receptor for glutamate. Ligand binding causes a conformation change that triggers signaling via guanine nucleotide-binding proteins (G proteins) and modulates the activity of down-stream effectors. Signaling inhibits adenylate cyclase activity. The protein is Metabotropic glutamate receptor 8 (Grm8) of Mus musculus (Mouse).